The sequence spans 95 residues: Co-chaperonin GroES (95 aa).

This sequence belongs to the GroES chaperonin family. As to quaternary structure, heptamer of 7 subunits arranged in a ring. Interacts with the chaperonin GroEL.

The protein localises to the cytoplasm. Its function is as follows. Together with the chaperonin GroEL, plays an essential role in assisting protein folding. The GroEL-GroES system forms a nano-cage that allows encapsulation of the non-native substrate proteins and provides a physical environment optimized to promote and accelerate protein folding. GroES binds to the apical surface of the GroEL ring, thereby capping the opening of the GroEL channel. The protein is Co-chaperonin GroES of Rickettsia canadensis (strain McKiel).